Consider the following 520-residue polypeptide: Transactivator/viroplasmin protein (520 aa).

The segment at 486-520 is disordered; the sequence is VQDASADSGPKDGPPPTRSIVEKEDVPTTSSKQVD.

It belongs to the caulimoviridae viroplasmin family.

It is found in the host cytoplasm. Functionally, enhances the ribosomal termination-reinitiation event leading to the translation of major open reading frames on the polycistronic viral RNAs. This Cauliflower mosaic virus (strain BBC) (CaMV) protein is Transactivator/viroplasmin protein.